Here is a 332-residue protein sequence, read N- to C-terminus: Long form salivary protein D7L2 (332 aa).

An N-terminal signal peptide occupies residues 1–21; sequence MFPPRKFLLSSFILAALHVTA. 2 disulfides stabilise this stretch: cysteine 40–cysteine 77 and cysteine 73–cysteine 133. Tryptophan 61 contributes to the leukotriene E4 binding site. 2 residues coordinate leukotriene E4: glycine 157 and lysine 176. 3 disulfide bridges follow: cysteine 184–cysteine 219, cysteine 200–cysteine 331, and cysteine 259–cysteine 278. Residues glutamate 185, arginine 203, and histidine 216 each contribute to the noradrenaline site. Aspartate 294 and glutamate 297 together coordinate noradrenaline.

It belongs to the PBP/GOBP family. In terms of assembly, interacts with human CD4. In terms of tissue distribution, saliva (at protein level). Female salivary gland (at protein level). Detected in the head and thorax of the female mosquitoes, where the salivary glands are located.

It is found in the secreted. Modulates blood feeding of female mosquitoes on vertebrate species by binding and sequestering different mediators involved in the host response, such as biogenic amines and eicosanoids. Binds serotonin, histamine, tryptamine, noradrenaline, leukotriene B4, leukotriene C4, leukotriene D4, leukotriene E4 and U-46619, a stable analog of thromboxane A2. Does not bind adrenaline. Exhibits vasodilating activity. Inhibits agonist-induced platelet aggregation but not blood clotting. Functionally, (Microbial infection) Probably promotes Plasmodium gallinaceum oocyst development in mosquito midgut. In Aedes aegypti (Yellowfever mosquito), this protein is Long form salivary protein D7L2.